The primary structure comprises 133 residues: C-C motif chemokine 21a (133 aa).

Positions 1–23 are cleaved as a signal peptide; it reads MAQMMTLSLLSLVLALCIPWTQG. Cystine bridges form between Cys-31-Cys-57, Cys-32-Cys-75, and Cys-103-Cys-122. The interval 86–133 is disordered; the sequence is LMRRLDQPPAPGKQSPGCRKNRGTSKSGKKGKGSKGCKRTEQTQPSRG. The segment at 98–133 is C-terminal basic extension; the sequence is KQSPGCRKNRGTSKSGKKGKGSKGCKRTEQTQPSRG. A compositionally biased stretch (basic residues) spans 104-122; the sequence is RKNRGTSKSGKKGKGSKGC.

It belongs to the intercrine beta (chemokine CC) family. Binds to CCR7 and to CXCR3. Interacts with PDPN; relocalizes PDPN to the basolateral membrane. Interacts with GPR174. Expressed strongly in lung, spleen, thymus, peripheral and mesentric lymph nodes. Also expressed in the testis, kidney, liver, and heart.

The protein localises to the secreted. Functionally, inhibits hemopoiesis and stimulates chemotaxis. Chemotactic in vitro for thymocytes and activated T-cells, but not for B-cells, macrophages, or neutrophils. Potent mesangial cell chemoattractant. Shows preferential activity towards naive T-cells. May play a role in mediating homing of lymphocytes to secondary lymphoid organs. This is C-C motif chemokine 21a (Ccl21a) from Mus musculus (Mouse).